The chain runs to 268 residues: MALNFPNIDPVIVKFGPFDIFGQTFEPALRWYGFTYLVGFVAAMWLLNRQADRSNGLWSREQVSDLLFYGFLGVILGGRIGYVLFYHFDYFLASPMYLFKISEGGMSFHGGLIGVITAMIYITWKQKRTFFAVADMVAPVVPIGLGAGRIGNFINGELWGRVTDVPWAMVFPSGGPEPRHPSQLYQFALEGVALFLLLYWFSKRTKKVGAVSGMFLLGYGIFRVIVETVRQPDAQLGLYWGLMTMGQILSVPMILFGLYLILRPEGKQ.

7 helical membrane-spanning segments follow: residues 27-47 (PALR…MWLL), 66-86 (LLFY…VLFY), 104-124 (GGMS…YITW), 130-150 (FFAV…AGRI), 181-201 (PSQL…LYWF), 208-228 (VGAV…IVET), and 242-262 (LMTM…YLIL). Residue arginine 149 coordinates a 1,2-diacyl-sn-glycero-3-phospho-(1'-sn-glycerol).

It belongs to the Lgt family.

Its subcellular location is the cell inner membrane. The catalysed reaction is L-cysteinyl-[prolipoprotein] + a 1,2-diacyl-sn-glycero-3-phospho-(1'-sn-glycerol) = an S-1,2-diacyl-sn-glyceryl-L-cysteinyl-[prolipoprotein] + sn-glycerol 1-phosphate + H(+). Its pathway is protein modification; lipoprotein biosynthesis (diacylglyceryl transfer). Functionally, catalyzes the transfer of the diacylglyceryl group from phosphatidylglycerol to the sulfhydryl group of the N-terminal cysteine of a prolipoprotein, the first step in the formation of mature lipoproteins. The polypeptide is Phosphatidylglycerol--prolipoprotein diacylglyceryl transferase (Shewanella oneidensis (strain ATCC 700550 / JCM 31522 / CIP 106686 / LMG 19005 / NCIMB 14063 / MR-1)).